A 430-amino-acid chain; its full sequence is Tol-Pal system protein TolB (430 aa).

An N-terminal signal peptide occupies residues 1–21 (MKQAFRVALGFLVLWASVLHA).

Belongs to the TolB family. As to quaternary structure, the Tol-Pal system is composed of five core proteins: the inner membrane proteins TolA, TolQ and TolR, the periplasmic protein TolB and the outer membrane protein Pal. They form a network linking the inner and outer membranes and the peptidoglycan layer.

It is found in the periplasm. Its function is as follows. Part of the Tol-Pal system, which plays a role in outer membrane invagination during cell division and is important for maintaining outer membrane integrity. TolB occupies a key intermediary position in the Tol-Pal system because it communicates directly with both membrane-embedded components, Pal in the outer membrane and TolA in the inner membrane. This Yersinia pestis protein is Tol-Pal system protein TolB.